The following is a 527-amino-acid chain: Cytochrome b5 reductase 4 (527 aa).

The segment at 1 to 24 (MLNVPSQAFPAAGSQQRVAPAGQS) is disordered. The Cytochrome b5 heme-binding domain maps to 56–132 (LIEVTEDELK…LKECLVGRMA (77 aa)). Heme contacts are provided by histidine 91 and histidine 114. A disordered region spans residues 138–171 (ALQAHTEKTESTHLNGLSAPPSLRPEPLSAPLPA). Residues 173–264 (DHRPRYDWFQ…SVKEKWTQLG (92 aa)) form the CS domain. Positions 281–392 (LFYRECVLLS…GGPEGSFTLR (112 aa)) constitute an FAD-binding FR-type domain. FAD is bound by residues 372–387 (ANLP…GPEG) and 399–431 (HLYM…KMKL).

Belongs to the flavoprotein pyridine nucleotide cytochrome reductase family. FAD serves as cofactor.

Its subcellular location is the endoplasmic reticulum. The catalysed reaction is 2 Fe(III)-[cytochrome b5] + NADH = 2 Fe(II)-[cytochrome b5] + NAD(+) + H(+). Functionally, NADH-cytochrome b5 reductase involved in endoplasmic reticulum stress response pathway. This is Cytochrome b5 reductase 4 (cyb5r4) from Danio rerio (Zebrafish).